The chain runs to 432 residues: Trigger factor (432 aa).

The 86-residue stretch at Gly162 to Pro247 folds into the PPIase FKBP-type domain.

Belongs to the FKBP-type PPIase family. Tig subfamily.

The protein resides in the cytoplasm. It carries out the reaction [protein]-peptidylproline (omega=180) = [protein]-peptidylproline (omega=0). In terms of biological role, involved in protein export. Acts as a chaperone by maintaining the newly synthesized protein in an open conformation. Functions as a peptidyl-prolyl cis-trans isomerase. The polypeptide is Trigger factor (Thiobacillus denitrificans (strain ATCC 25259 / T1)).